The chain runs to 158 residues: Small ribosomal subunit protein uS7 (158 aa).

This sequence belongs to the universal ribosomal protein uS7 family. As to quaternary structure, part of the 30S ribosomal subunit. Contacts proteins S9 and S11.

Functionally, one of the primary rRNA binding proteins, it binds directly to 16S rRNA where it nucleates assembly of the head domain of the 30S subunit. Is located at the subunit interface close to the decoding center, probably blocks exit of the E-site tRNA. This Parabacteroides distasonis (strain ATCC 8503 / DSM 20701 / CIP 104284 / JCM 5825 / NCTC 11152) protein is Small ribosomal subunit protein uS7.